The sequence spans 272 residues: Orotidine 5'-phosphate decarboxylase (272 aa).

K95 acts as the Proton donor in catalysis.

The protein belongs to the OMP decarboxylase family. Type 2 subfamily.

It carries out the reaction orotidine 5'-phosphate + H(+) = UMP + CO2. It functions in the pathway pyrimidine metabolism; UMP biosynthesis via de novo pathway; UMP from orotate: step 2/2. This Bordetella avium (strain 197N) protein is Orotidine 5'-phosphate decarboxylase.